Reading from the N-terminus, the 119-residue chain is Holo-[acyl-carrier-protein] synthase (119 aa).

Asp8 and Glu50 together coordinate Mg(2+).

The protein belongs to the P-Pant transferase superfamily. AcpS family. The cofactor is Mg(2+).

It is found in the cytoplasm. It carries out the reaction apo-[ACP] + CoA = holo-[ACP] + adenosine 3',5'-bisphosphate + H(+). Transfers the 4'-phosphopantetheine moiety from coenzyme A to a Ser of acyl-carrier-protein. This chain is Holo-[acyl-carrier-protein] synthase, found in Clavibacter sepedonicus (Clavibacter michiganensis subsp. sepedonicus).